Consider the following 441-residue polypeptide: Probable D-serine dehydratase (441 aa).

Lys-115 is modified (N6-(pyridoxal phosphate)lysine).

This sequence belongs to the serine/threonine dehydratase family. DsdA subfamily. Pyridoxal 5'-phosphate is required as a cofactor.

The catalysed reaction is D-serine = pyruvate + NH4(+). This chain is Probable D-serine dehydratase, found in Fusobacterium nucleatum subsp. nucleatum (strain ATCC 25586 / DSM 15643 / BCRC 10681 / CIP 101130 / JCM 8532 / KCTC 2640 / LMG 13131 / VPI 4355).